Reading from the N-terminus, the 320-residue chain is Probable trehalose-phosphate phosphatase C (320 aa).

It belongs to the trehalose phosphatase family. The cofactor is a divalent metal cation.

The catalysed reaction is alpha,alpha-trehalose 6-phosphate + H2O = alpha,alpha-trehalose + phosphate. It participates in glycan biosynthesis; trehalose biosynthesis. Functionally, removes the phosphate from trehalose 6-phosphate to produce free trehalose. Trehalose accumulation in plant may improve abiotic stress tolerance. In Arabidopsis thaliana (Mouse-ear cress), this protein is Probable trehalose-phosphate phosphatase C (TPPC).